A 600-amino-acid polypeptide reads, in one-letter code: UvrABC system protein C (600 aa).

A GIY-YIG domain is found at Asn15 to Ile100. Residues Ser203–Leu238 enclose the UVR domain.

The protein belongs to the UvrC family. Interacts with UvrB in an incision complex.

The protein localises to the cytoplasm. Its function is as follows. The UvrABC repair system catalyzes the recognition and processing of DNA lesions. UvrC both incises the 5' and 3' sides of the lesion. The N-terminal half is responsible for the 3' incision and the C-terminal half is responsible for the 5' incision. The protein is UvrABC system protein C of Campylobacter jejuni (strain RM1221).